The primary structure comprises 280 residues: uncharacterized protein (280 aa).

Disordered stretches follow at residues 1-124 and 177-280; these read MPRD…QREA and LEEE…LSSK. Composition is skewed to basic residues over residues 16–36 and 48–83; these read SRRRKHSRSPVRQRHSRRSRR and YSRRKSRSISPRRHRSRSVTPKRRSPTPKRYKRQKS. Composition is skewed to basic and acidic residues over residues 102–124 and 182–259; these read AKNRNGEKLKREEEERKRRQREA and EASL…ERLK.

This is an uncharacterized protein from Arabidopsis thaliana (Mouse-ear cress).